The primary structure comprises 466 residues: tRNA-2-methylthio-N(6)-dimethylallyladenosine synthase (466 aa).

The 121-residue stretch at 3–123 folds into the MTTase N-terminal domain; it reads KKLYIKTYGC…LPEMVARAVR (121 aa). The [4Fe-4S] cluster site is built by C12, C48, C86, C162, C166, and C169. Residues 148-381 enclose the Radical SAM core domain; sequence SPAGPSAFLS…QQLLTAQQTA (234 aa). Residues 384–446 enclose the TRAM domain; sequence TACVGRVQPV…ANSLSGTVVV (63 aa).

Belongs to the methylthiotransferase family. MiaB subfamily. As to quaternary structure, monomer. It depends on [4Fe-4S] cluster as a cofactor.

The protein resides in the cytoplasm. It carries out the reaction N(6)-dimethylallyladenosine(37) in tRNA + (sulfur carrier)-SH + AH2 + 2 S-adenosyl-L-methionine = 2-methylsulfanyl-N(6)-dimethylallyladenosine(37) in tRNA + (sulfur carrier)-H + 5'-deoxyadenosine + L-methionine + A + S-adenosyl-L-homocysteine + 2 H(+). In terms of biological role, catalyzes the methylthiolation of N6-(dimethylallyl)adenosine (i(6)A), leading to the formation of 2-methylthio-N6-(dimethylallyl)adenosine (ms(2)i(6)A) at position 37 in tRNAs that read codons beginning with uridine. In Rhodospirillum centenum (strain ATCC 51521 / SW), this protein is tRNA-2-methylthio-N(6)-dimethylallyladenosine synthase.